Reading from the N-terminus, the 750-residue chain is Coiled-coil domain-containing protein 142 (750 aa).

The disordered stretch occupies residues M1–E29. Residues A87–D110 are a coiled coil. Positions L687–P714 are disordered. Residues P693 to L707 are compositionally biased toward polar residues.

This chain is Coiled-coil domain-containing protein 142 (CCDC142), found in Homo sapiens (Human).